The sequence spans 394 residues: 1-deoxy-D-xylulose 5-phosphate reductoisomerase (394 aa).

T10, G11, S12, I13, G38, R39, N40, and N123 together coordinate NADPH. Residue K124 participates in 1-deoxy-D-xylulose 5-phosphate binding. Residue E125 coordinates NADPH. D149 provides a ligand contact to Mn(2+). S150, E151, S175, and H198 together coordinate 1-deoxy-D-xylulose 5-phosphate. Residue E151 coordinates Mn(2+). NADPH is bound at residue G204. 4 residues coordinate 1-deoxy-D-xylulose 5-phosphate: S211, N216, K217, and E220. A Mn(2+)-binding site is contributed by E220.

Belongs to the DXR family. Mg(2+) is required as a cofactor. The cofactor is Mn(2+).

The enzyme catalyses 2-C-methyl-D-erythritol 4-phosphate + NADP(+) = 1-deoxy-D-xylulose 5-phosphate + NADPH + H(+). It participates in isoprenoid biosynthesis; isopentenyl diphosphate biosynthesis via DXP pathway; isopentenyl diphosphate from 1-deoxy-D-xylulose 5-phosphate: step 1/6. In terms of biological role, catalyzes the NADPH-dependent rearrangement and reduction of 1-deoxy-D-xylulose-5-phosphate (DXP) to 2-C-methyl-D-erythritol 4-phosphate (MEP). In Cereibacter sphaeroides (strain KD131 / KCTC 12085) (Rhodobacter sphaeroides), this protein is 1-deoxy-D-xylulose 5-phosphate reductoisomerase.